The sequence spans 340 residues: Protein RecA (340 aa).

65–72 (GPESGGKT) is an ATP binding site.

This sequence belongs to the RecA family.

The protein resides in the cytoplasm. Functionally, can catalyze the hydrolysis of ATP in the presence of single-stranded DNA, the ATP-dependent uptake of single-stranded DNA by duplex DNA, and the ATP-dependent hybridization of homologous single-stranded DNAs. It interacts with LexA causing its activation and leading to its autocatalytic cleavage. The chain is Protein RecA from Thermus thermophilus (strain ATCC BAA-163 / DSM 7039 / HB27).